We begin with the raw amino-acid sequence, 288 residues long: Rhox homeobox family member 2B (288 aa).

The segment at 16–136 (SPAVDDEKEL…GLEPGNAQQP (121 aa)) is disordered. Positions 39-48 (VKEEEEDAQP) are enriched in acidic residues. The segment covering 68-80 (GEEKDGGGEEKDG) has biased composition (basic and acidic residues). Positions 134–193 (QQPNVHAFTPLQLQELECIFQREQFPSEFLRRRLARSMNVTELAVQIWFENRRAKWRRHQ) form a DNA-binding region, homeobox. The Nuclear localization signal signature appears at 186–195 (RAKWRRHQRA).

It belongs to the paired-like homeobox family. PEPP subfamily. In terms of tissue distribution, expressed in testis, mainly expressed in germ cells, but also detected in somatic cells such as Sertoli cells, Leydig cells and peritubular cells.

Its subcellular location is the nucleus. Functionally, transcription factor maybe involved in reproductive processes. Modulates expression of target genes encoding proteins involved in processes relevant to spermatogenesis. The polypeptide is Rhox homeobox family member 2B (Homo sapiens (Human)).